We begin with the raw amino-acid sequence, 174 residues long: uncharacterized protein (174 aa).

The interval 1–55 (MGCVVSKSDDIKNENESRQRNQASSSQQPSSSQTPSKQIGIAAKDSEEQPQEVSY) is disordered. Glycine 2 carries the N-myristoyl glycine lipid modification. The span at 7 to 19 (KSDDIKNENESRQ) shows a compositional bias: basic and acidic residues. Low complexity predominate over residues 20 to 38 (RNQASSSQQPSSSQTPSKQ).

This is an uncharacterized protein from Dictyostelium discoideum (Social amoeba).